A 195-amino-acid polypeptide reads, in one-letter code: Cysteine/O-acetylserine efflux protein (195 aa).

The Periplasmic portion of the chain corresponds to 1–7 (MTPTLLS). The chain crosses the membrane as a helical span at residues 8-28 (AFWTYTLITAMTPGPNNILAL). Topologically, residues 29 to 46 (SSATSHGFRQSTRVLAGM) are cytoplasmic. A helical transmembrane segment spans residues 47–67 (SLGFLIVMLLCAGISFSLAVI). Over 68–69 (DP) the chain is Periplasmic. Residues 70 to 90 (AAVHLLSWAGAAYIVWLAWKI) form a helical membrane-spanning segment. The Cytoplasmic portion of the chain corresponds to 91–104 (ATSPTKEDGLQTKP). The chain crosses the membrane as a helical span at residues 105–125 (ISFWASFALQFVNVKIILYGV). Topologically, residues 126–141 (TALSTFVLPQTQALSW) are periplasmic. A helical membrane pass occupies residues 142–162 (VVGVSVLLAMIGTFGNVCWAL). The Cytoplasmic portion of the chain corresponds to 163 to 176 (AGHLFQRLFRQYGR). Residues 177–194 (QLNIVLALLLVYCAVRIF) traverse the membrane as a helical segment. A topological domain (periplasmic) is located at residue Tyr-195.

It belongs to the Rht family.

It localises to the cell inner membrane. The catalysed reaction is O-acetyl-L-serine(in) = O-acetyl-L-serine(out). It catalyses the reaction L-cysteine(in) = L-cysteine(out). Exporter of O-acetylserine (OAS) and cysteine. This is Cysteine/O-acetylserine efflux protein (eamB) from Escherichia coli O1:K1 / APEC.